The chain runs to 466 residues: Glutamate--tRNA ligase (466 aa).

The 'HIGH' region motif lies at 10 to 20 (PSPTGYLHVGG). Positions 99, 101, 126, and 128 each coordinate Zn(2+). Residues 237–241 (RLSKR) carry the 'KMSKS' region motif. Lys240 contributes to the ATP binding site.

It belongs to the class-I aminoacyl-tRNA synthetase family. Glutamate--tRNA ligase type 1 subfamily. Monomer. Requires Zn(2+) as cofactor.

The protein resides in the cytoplasm. The enzyme catalyses tRNA(Glu) + L-glutamate + ATP = L-glutamyl-tRNA(Glu) + AMP + diphosphate. In terms of biological role, catalyzes the attachment of glutamate to tRNA(Glu) in a two-step reaction: glutamate is first activated by ATP to form Glu-AMP and then transferred to the acceptor end of tRNA(Glu). In Trichlorobacter lovleyi (strain ATCC BAA-1151 / DSM 17278 / SZ) (Geobacter lovleyi), this protein is Glutamate--tRNA ligase.